The sequence spans 302 residues: Methionyl-tRNA formyltransferase (302 aa).

Position 108 to 111 (108 to 111 (SILP)) interacts with (6S)-5,6,7,8-tetrahydrofolate.

Belongs to the Fmt family.

The catalysed reaction is L-methionyl-tRNA(fMet) + (6R)-10-formyltetrahydrofolate = N-formyl-L-methionyl-tRNA(fMet) + (6S)-5,6,7,8-tetrahydrofolate + H(+). In terms of biological role, attaches a formyl group to the free amino group of methionyl-tRNA(fMet). The formyl group appears to play a dual role in the initiator identity of N-formylmethionyl-tRNA by promoting its recognition by IF2 and preventing the misappropriation of this tRNA by the elongation apparatus. The chain is Methionyl-tRNA formyltransferase from Sulfurimonas denitrificans (strain ATCC 33889 / DSM 1251) (Thiomicrospira denitrificans (strain ATCC 33889 / DSM 1251)).